A 458-amino-acid polypeptide reads, in one-letter code: Argininosuccinate lyase (458 aa).

It belongs to the lyase 1 family. Argininosuccinate lyase subfamily.

It localises to the cytoplasm. It catalyses the reaction 2-(N(omega)-L-arginino)succinate = fumarate + L-arginine. It functions in the pathway amino-acid biosynthesis; L-arginine biosynthesis; L-arginine from L-ornithine and carbamoyl phosphate: step 3/3. The sequence is that of Argininosuccinate lyase from Salmonella paratyphi B (strain ATCC BAA-1250 / SPB7).